The sequence spans 212 residues: Inner membrane-spanning protein YciB (212 aa).

The next 6 membrane-spanning stretches (helical) occupy residues 19–39 (FYGALPPEWILAVGVWLPVAL), 47–67 (AIYLATAVAMVVMAVQLALGL), 82–102 (AVILVLGGATLWLHDPVFILW), 105–122 (TLVNWLFALVFMAPPLFG), 147–167 (LAWVVFFLVSGLANLFVAYTF), and 177–197 (LFGMLGMTFVFVIGQAVYLGL).

Belongs to the YciB family.

The protein localises to the cell inner membrane. Plays a role in cell envelope biogenesis, maintenance of cell envelope integrity and membrane homeostasis. The sequence is that of Inner membrane-spanning protein YciB from Thioalkalivibrio sulfidiphilus (strain HL-EbGR7).